Reading from the N-terminus, the 944-residue chain is Breast cancer type 2 susceptibility protein homolog (944 aa).

2 stretches are compositionally biased toward basic and acidic residues: residues 325–348 (KKVKLEPSSQKEQKSSKDSNESKI) and 415–431 (NSIKRNDEEQPEKETPN). Disordered regions lie at residues 325 to 354 (KKVKLEPSSQKEQKSSKDSNESKIRAASCD) and 415 to 440 (NSIKRNDEEQPEKETPNKSRSTSSHQ). BRCA2 repeat units follow at residues 543–577 (AEPEFCGFRTASNKAIPISEKMKIKTAEFMAEFQS), 644–678 (NESQFFGFRTASNKAIEITEAMEKRGAMFLAQSRA), and 719–753 (SETEFFGFRTASNKGIVISENTKKKVAQFMSEFQA). Disordered stretches follow at residues 823-854 (LCSQPLVRTPRRSQEIHSSLSQLAGQSPLDQA) and 876-944 (SSTE…RSRY). Composition is skewed to polar residues over residues 838–852 (IHSSLSQLAGQSPLD) and 876–885 (SSTETSTSCA). Over residues 904–921 (ADRDLNRSKDCAKNRQDA) the composition is skewed to basic and acidic residues. Positions 932 to 944 (KKSRRLGLSRSRY) are enriched in basic residues.

As to quaternary structure, interacts with Rad9 and spn-A/Rad51.

It is found in the nucleus. Functionally, involved in and required for double-strand break repair by meiotic and mitotic homologous recombination. During meiosis, has a dual role in the repair of meiotic double-stranded breaks and the efficient activation of the meiotic recombination checkpoint. The protein is Breast cancer type 2 susceptibility protein homolog of Drosophila simulans (Fruit fly).